A 66-amino-acid chain; its full sequence is Large ribosomal subunit protein bL28 (66 aa).

This sequence belongs to the bacterial ribosomal protein bL28 family.

The protein is Large ribosomal subunit protein bL28 of Oenococcus oeni (strain ATCC BAA-331 / PSU-1).